A 238-amino-acid chain; its full sequence is Large ribosomal subunit protein uL1 (238 aa).

The protein belongs to the universal ribosomal protein uL1 family. As to quaternary structure, part of the 50S ribosomal subunit.

Functionally, binds directly to 23S rRNA. The L1 stalk is quite mobile in the ribosome, and is involved in E site tRNA release. Its function is as follows. Protein L1 is also a translational repressor protein, it controls the translation of the L11 operon by binding to its mRNA. This is Large ribosomal subunit protein uL1 from Gloeobacter violaceus (strain ATCC 29082 / PCC 7421).